We begin with the raw amino-acid sequence, 138 residues long: Thyrotropin subunit beta (138 aa).

The N-terminal stretch at 1–20 is a signal peptide; it reads MTAIFLMSVLFGLACGQAMS. Disulfide bonds link Cys-22/Cys-72, Cys-36/Cys-87, Cys-39/Cys-125, Cys-47/Cys-103, Cys-51/Cys-105, and Cys-108/Cys-115. An N-linked (GlcNAc...) asparagine glycan is attached at Asn-43. The propeptide occupies 133-138; it reads VVGLSI.

This sequence belongs to the glycoprotein hormones subunit beta family. As to quaternary structure, heterodimer of a common alpha chain and a unique beta chain which confers biological specificity to thyrotropin, lutropin, follitropin and gonadotropin.

The protein localises to the secreted. In terms of biological role, indispensable for the control of thyroid structure and metabolism. This Lama glama (Llama) protein is Thyrotropin subunit beta (TSHB).